A 178-amino-acid polypeptide reads, in one-letter code: ATP synthase subunit delta (178 aa).

The protein belongs to the ATPase delta chain family. F-type ATPases have 2 components, F(1) - the catalytic core - and F(0) - the membrane proton channel. F(1) has five subunits: alpha(3), beta(3), gamma(1), delta(1), epsilon(1). F(0) has three main subunits: a(1), b(2) and c(10-14). The alpha and beta chains form an alternating ring which encloses part of the gamma chain. F(1) is attached to F(0) by a central stalk formed by the gamma and epsilon chains, while a peripheral stalk is formed by the delta and b chains.

The protein localises to the cell inner membrane. F(1)F(0) ATP synthase produces ATP from ADP in the presence of a proton or sodium gradient. F-type ATPases consist of two structural domains, F(1) containing the extramembraneous catalytic core and F(0) containing the membrane proton channel, linked together by a central stalk and a peripheral stalk. During catalysis, ATP synthesis in the catalytic domain of F(1) is coupled via a rotary mechanism of the central stalk subunits to proton translocation. Functionally, this protein is part of the stalk that links CF(0) to CF(1). It either transmits conformational changes from CF(0) to CF(1) or is implicated in proton conduction. This is ATP synthase subunit delta from Azotobacter vinelandii (strain DJ / ATCC BAA-1303).